The primary structure comprises 295 residues: Small ribosomal subunit protein bS1 (295 aa).

S1 motif domains lie at 28–97 (GQLV…VSLR), 115–179 (GQTV…LSER), and 193–261 (GQLI…LSTK).

The protein belongs to the bacterial ribosomal protein bS1 family.

Binds mRNA. The sequence is that of Small ribosomal subunit protein bS1 (rpsA) from Synechococcus elongatus (strain ATCC 33912 / PCC 7942 / FACHB-805) (Anacystis nidulans R2).